Here is a 378-residue protein sequence, read N- to C-terminus: T-cell immunoglobulin and mucin domain-containing protein 4 (378 aa).

The signal sequence occupies residues 1-24; sequence MSKEPLILWLMIEFWWLYLTPVTS. Positions 25–126 constitute an Ig-like V-type domain; the sequence is ETVVTEVLGH…PGWFNDVKIN (102 aa). At 25–314 the chain is on the extracellular side; that stretch reads ETVVTEVLGH…SMKNEMPISQ (290 aa). 3 disulfides stabilise this stretch: Cys-40–Cys-112, Cys-53–Cys-64, and Cys-59–Cys-111. 2 disordered regions span residues 136 to 160 and 269 to 304; these read TTTHRTATTTTRRTTTTSPTTTRQM and WKTSDSVSSPQPGASDTAVPEQNKTTKTGQMDGIPM. Residues 269–297 show a composition bias toward polar residues; the sequence is WKTSDSVSSPQPGASDTAVPEQNKTTKTG. N-linked (GlcNAc...) asparagine glycosylation is present at Asn-291. The chain crosses the membrane as a helical span at residues 315–335; it reads LLMIIAPSLGFVLFALFVAFL. Residues 336–378 lie on the Cytoplasmic side of the membrane; it reads LRGKLMETYCSQKHTRLDYIGDSKNVLNDVQHGREDEDGLFTL. Ser-358 is modified (phosphoserine).

It belongs to the immunoglobulin superfamily. TIM family. In terms of assembly, interacts with MERTK; this interaction enhances TIMD4-mediated efferocytosis. Interacts with EPHA2.

The protein resides in the cell membrane. The protein localises to the secreted. It localises to the extracellular exosome. Its function is as follows. Phosphatidylserine receptor that plays different role in immune response including phagocytosis of apoptotic cells and T-cell regulation. Controls T-cell activation in a bimodal fashion, decreasing the activation of naive T-cells by inducing cell cycle arrest, while increasing proliferation of activated T-cells by activating AKT1 and ERK1/2 phosphorylations and subsequent signaling pathways. Also plays a role in efferocytosis which is the process by which apoptotic cells are removed by phagocytic cells. Mechanistically, promotes the engulfment of apoptotic cells or exogenous particles by securing them to phagocytes through direct binding to phosphatidylserine present on apoptotic cells, while other engulfment receptors such as MERTK efficiently recognize apoptotic cells and mediate their ingestion. Additionally, promotes autophagy process by suppressing NLRP3 inflammasome activity via activation of LKB1/PRKAA1 pathway in a phosphatidylserine-dependent mechanism. In terms of biological role, (Microbial infection) Plays a positive role in exosome-mediated trafficking of HIV-1 virus and its entry into immune cells. The polypeptide is T-cell immunoglobulin and mucin domain-containing protein 4 (TIMD4) (Homo sapiens (Human)).